The following is a 477-amino-acid chain: Protein RdxB (477 aa).

Over 1–29 (MTSPDTQTSSLYAKREPVFPKRVSGKFRS) the chain is Cytoplasmic. The helical transmembrane segment at 30 to 50 (LKWWIMGVTLGIYYIAPWLRW) threads the bilayer. The Periplasmic segment spans residues 51 to 81 (DRGPNLPDQAILVDLANRRFFFFMIEIWPHE). A helical membrane pass occupies residues 82–102 (FYFVAGLLIMAGLGLFLFTSA). At 103–154 (AGRVWCGYACPQTVWTDLFILVERWVEGDRNARIRLLRQRWDLEKTRKYLTK) the chain is on the cytoplasmic side. Residues 155 to 175 (WTLWLLIGLATGGAWVFYFTD) form a helical membrane-spanning segment. The Periplasmic portion of the chain corresponds to 176 to 189 (APTLLVDLLTGNAH). A helical transmembrane segment spans residues 190–210 (PVAYITMATLTATTFAFGGFA). The Cytoplasmic portion of the chain corresponds to 211–338 (REQICIYACP…SAWRHVFRLR (128 aa)). Residues 253-281 (EPLSPDQGDCIDCMACVNVCPMGIDIRDG) enclose the 4Fe-4S ferredoxin-type domain. Positions 262, 265, 268, 272, 286, 289, 292, and 296 each coordinate [4Fe-4S] cluster. The chain crosses the membrane as a helical span at residues 339 to 359 (TLIYTALWSGVGLALIVALFL). At 360–477 (RSPIDINVTP…HDTIFNGRGN (118 aa)) the chain is on the periplasmic side.

It depends on [4Fe-4S] cluster as a cofactor.

It localises to the cell membrane. Involved in a membrane generated redox signal; required to maintain repression of photosynthesis gene expression in the presence of oxygen. This chain is Protein RdxB (rdxB), found in Cereibacter sphaeroides (strain ATCC 17023 / DSM 158 / JCM 6121 / CCUG 31486 / LMG 2827 / NBRC 12203 / NCIMB 8253 / ATH 2.4.1.) (Rhodobacter sphaeroides).